Reading from the N-terminus, the 211-residue chain is 3-demethoxyubiquinol 3-hydroxylase (211 aa).

The Fe cation site is built by Glu60, Glu90, His93, Glu142, Glu174, and His177.

This sequence belongs to the COQ7 family. Fe cation is required as a cofactor.

It localises to the cell membrane. The catalysed reaction is a 5-methoxy-2-methyl-3-(all-trans-polyprenyl)benzene-1,4-diol + AH2 + O2 = a 3-demethylubiquinol + A + H2O. It participates in cofactor biosynthesis; ubiquinone biosynthesis. Functionally, catalyzes the hydroxylation of 2-nonaprenyl-3-methyl-6-methoxy-1,4-benzoquinol during ubiquinone biosynthesis. In Acinetobacter baylyi (strain ATCC 33305 / BD413 / ADP1), this protein is 3-demethoxyubiquinol 3-hydroxylase.